Here is a 494-residue protein sequence, read N- to C-terminus: MKYSDLRDFISQLQQMGELKRINMPVSPYLEMTEICDRTLRAEGPALLFENPTGHTIPVLGNLFGTPQRVALGMGATDVSELRKIGHVLAMLKEPEPPKGFKDMLGLGSLVKSLWDMTPKERRDAPCHDIVWEGNDVDLARLPIQHCWPGDIAPLITWGLVITKGPHKKRQNLGIYRQQVIGRNKVIMRWLAQRGGALDFREHSIANRGQPYPIAVALGADPATILGAVTPVPDSLSEYQFAGLLRGSRTELVKAIGSELRVPASAEIVLEGHIYPDESHPSGYEHALEGPYGDHTGYYNEQDTFPVFTIDRITMRRDPIYHSTYTGKPPDEPAILGVALNEVFIPLLQKQFSEILDFYLPPEGCSYRMAVVQMKKAYPGHAKRVMFGVWSFLRQFMYTKFIIVVDEDVNIRDWKEVIWAITTRVDPTRDTTLVDNTPIDYLDFASPVSGLGSKMGIDATNKWPGETDREWGTTITMTPEVKKRVDQIWQELGI.

A Mn(2+)-binding site is contributed by N172. Prenylated FMN is bound by residues 175–177 (IYR), 189–191 (RWL), and 194–195 (RG). E238 is a binding site for Mn(2+). D294 functions as the Proton donor in the catalytic mechanism.

This sequence belongs to the UbiD family. Homohexamer. Requires prenylated FMN as cofactor. Mn(2+) is required as a cofactor.

Its subcellular location is the cell membrane. The catalysed reaction is a 4-hydroxy-3-(all-trans-polyprenyl)benzoate + H(+) = a 2-(all-trans-polyprenyl)phenol + CO2. Its pathway is cofactor biosynthesis; ubiquinone biosynthesis. In terms of biological role, catalyzes the decarboxylation of 3-octaprenyl-4-hydroxy benzoate to 2-octaprenylphenol, an intermediate step in ubiquinone biosynthesis. This chain is 3-octaprenyl-4-hydroxybenzoate carboxy-lyase, found in Herminiimonas arsenicoxydans.